Here is a 130-residue protein sequence, read N- to C-terminus: UPF0251 protein MmarC7_1642 (130 aa).

Belongs to the UPF0251 family.

The chain is UPF0251 protein MmarC7_1642 from Methanococcus maripaludis (strain C7 / ATCC BAA-1331).